A 364-amino-acid polypeptide reads, in one-letter code: Spermidine/putrescine import ATP-binding protein PotA (364 aa).

Residues 10 to 244 form the ABC transporter domain; that stretch reads IEVVNVSKIF…PAERFVADFI (235 aa). ATP is bound at residue 46–53; it reads GPSGCGKT.

It belongs to the ABC transporter superfamily. Spermidine/putrescine importer (TC 3.A.1.11.1) family. In terms of assembly, the complex is composed of two ATP-binding proteins (PotA), two transmembrane proteins (PotB and PotC) and a solute-binding protein (PotD).

It is found in the cell inner membrane. It carries out the reaction ATP + H2O + polyamine-[polyamine-binding protein]Side 1 = ADP + phosphate + polyamineSide 2 + [polyamine-binding protein]Side 1.. In terms of biological role, part of the ABC transporter complex PotABCD involved in spermidine/putrescine import. Responsible for energy coupling to the transport system. The polypeptide is Spermidine/putrescine import ATP-binding protein PotA (Mesorhizobium japonicum (strain LMG 29417 / CECT 9101 / MAFF 303099) (Mesorhizobium loti (strain MAFF 303099))).